The sequence spans 446 residues: 6-methylsalicylate 1-monooxygenase atA (446 aa).

The chain crosses the membrane as a helical span at residues 7–27 (VSVAIIGGGIGGLSLAIGLLQ). FAD is bound by residues Glu37 and Ala50. An N-linked (GlcNAc...) asparagine glycan is attached at Asn107. Arg116 provides a ligand contact to FAD. Arg200 is an active-site residue. Asp311 and Ala324 together coordinate FAD.

The protein belongs to the paxM FAD-dependent monooxygenase family. FAD serves as cofactor.

It is found in the membrane. The enzyme catalyses 6-methylsalicylate + AH2 + O2 + H(+) = 3-methylcatechol + A + CO2 + H2O. The protein operates within secondary metabolite biosynthesis. In terms of biological role, 6-methylsalicylate 1-monooxygenase; part of the gene cluster that mediates the biosynthesis of terreic acid, a quinone epoxide inhibitor of Bruton's tyrosine kinase. The first step of the pathway is the synthesis of 6-methylsalicylic acid (6-MSA) by the 6-methylsalicylic acid synthase atX. In the biosynthesis of 6-MSA, atX utilizes one acetyl-CoA and three malonyl-CoAs as its substrates and catalyzes a series of programmed reactions including Claisen condensation, reduction, aldol cyclization, and the hydrolytic cleavage that yields 6-MSA. The 6-methylsalicylate 1-monooxygenase atA then catalyzes the decarboxylative hydroxylation of 6-MSA to 3-methylcatechol. The next step is the conversion of 3-methylcatechol to 3-methyl-1,2,4-benzenetriol by cytochrome P450 monooxygenase atE, which is enhanced by cytochrome P450 monooxygenase atG. Then, the epoxidase atD catalyzes the epoxidation and hydroxyl oxidation of 3-methyl-1,2,4-benzenetriol to terremutin. Lastly, GMC oxidoreductase atC oxidizes terremutin to terreic acid. In Aspergillus terreus (strain NIH 2624 / FGSC A1156), this protein is 6-methylsalicylate 1-monooxygenase atA.